The following is a 226-amino-acid chain: B-cell antigen receptor complex-associated protein alpha chain (226 aa).

Residues 1-32 form the signal peptide; that stretch reads MPGGPGVLQALPATIFLLFLLSAVYLGPGCQA. An Ig-like C2-type domain is found at 33–116; sequence LWMHKVPASL…RVQEGNESYQ (84 aa). Over 33–143 the chain is Extracellular; that stretch reads LWMHKVPASL…LDMGEGTKNR (111 aa). C54 and C106 are disulfide-bonded. N-linked (GlcNAc...) asparagine glycans are attached at residues N57, N63, N73, N88, N97, and N112. Residues 144 to 165 form a helical membrane-spanning segment; it reads IITAEGIILLFCAVVPGTLLLF. Over 166 to 226 the chain is Cytoplasmic; the sequence is RKRWQNEKLG…NIGDVQLEKP (61 aa). One can recognise an ITAM domain in the interval 177 to 205; it reads DAGDEYEDENLYEGLNLDDCSMYEDISRG. Residues Y188 and Y199 each carry the phosphotyrosine; by SRC-type Tyr-kinases modification. R204 is modified (asymmetric dimethylarginine; by PRMT1). At Y210 the chain carries Phosphotyrosine; by Tyr-kinases.

Heterodimer of alpha and beta chains; disulfide-linked. Part of the B-cell antigen receptor complex where the alpha/beta chain heterodimer is non-covalently associated with an antigen-specific membrane-bound surface immunoglobulin of two heavy chains and two light chains. Interacts through its phosphorylated ITAM domain with the SH2 domains of SYK which stimulates SYK autophosphorylation and activation. Also interacts, when phosphorylated on Tyr-210, with the SH2 domain of BLNK/SLP65, bringing BLNK into proximity with SYK and allowing SYK to phosphorylate BLNK which is necessary for trafficking of the BCR to late endosomes. Interacts with Src-family tyrosine kinases including FYN and LYN, increasing their activity. Post-translationally, phosphorylated on tyrosine, serine and threonine residues upon B-cell activation. Phosphorylation of tyrosine residues by Src-family kinases is an early and essential feature of the BCR signaling cascade. The phosphorylated tyrosines serve as docking sites for SH2-domain containing kinases, leading to their activation which in turn leads to phosphorylation of downstream targets. Phosphorylated by LYN. Phosphorylation of serine and threonine residues may prevent subsequent tyrosine phosphorylation. In terms of processing, arginine methylation in the ITAM domain may interfere with the binding of SYK. It promotes signals leading to B-cell differentiation. As to expression, B-cells.

The protein resides in the cell membrane. Its function is as follows. Required in cooperation with CD79B for initiation of the signal transduction cascade activated by binding of antigen to the B-cell antigen receptor complex (BCR) which leads to internalization of the complex, trafficking to late endosomes and antigen presentation. Also required for BCR surface expression and for efficient differentiation of pro- and pre-B-cells. Stimulates SYK autophosphorylation and activation. Binds to BLNK, bringing BLNK into proximity with SYK and allowing SYK to phosphorylate BLNK. Also interacts with and increases activity of some Src-family tyrosine kinases. Represses BCR signaling during development of immature B-cells. This is B-cell antigen receptor complex-associated protein alpha chain (CD79A) from Homo sapiens (Human).